The following is a 190-amino-acid chain: Vexin (190 aa).

The tract at residues 88–156 (AEKKASRFSR…DEATLPLTAH (69 aa)) is disordered. Residues 117-133 (TDKQNAPTVPASPSSYE) are compositionally biased toward polar residues. A compositionally biased stretch (basic and acidic residues) spans 136–149 (GCREQRPENPKDEA).

The protein belongs to the vexin family. Expressed in differentiating progenitors in the developing central nervous system (CNS).

It localises to the cell membrane. The protein localises to the nucleus. Its function is as follows. Required for neurogenesis in the neural plate and retina. Cooperates with cell cycle inhibitor cdknx/p27(xic1) to enhance neurogenesis and increase the levels of the neuronal determination factor neurog2/X-ngngr-1. This chain is Vexin, found in Xenopus laevis (African clawed frog).